Reading from the N-terminus, the 901-residue chain is Aconitate hydratase A (901 aa).

Positions 443, 509, and 512 each coordinate [4Fe-4S] cluster.

Belongs to the aconitase/IPM isomerase family. As to quaternary structure, monomer. The cofactor is [4Fe-4S] cluster.

The enzyme catalyses citrate = D-threo-isocitrate. The catalysed reaction is (2S,3R)-3-hydroxybutane-1,2,3-tricarboxylate = 2-methyl-cis-aconitate + H2O. The protein operates within carbohydrate metabolism; tricarboxylic acid cycle; isocitrate from oxaloacetate: step 2/2. It functions in the pathway organic acid metabolism; propanoate degradation. In terms of biological role, involved in the catabolism of short chain fatty acids (SCFA) via the tricarboxylic acid (TCA)(acetyl degradation route) and probably the 2-methylcitrate cycle I (propionate degradation route). Catalyzes the reversible isomerization of citrate to isocitrate via cis-aconitate. Could catalyze the hydration of 2-methyl-cis-aconitate to yield (2R,3S)-2-methylisocitrate. The apo form of AcnA functions as a RNA-binding regulatory protein. The chain is Aconitate hydratase A (acnA) from Staphylococcus epidermidis (strain ATCC 35984 / DSM 28319 / BCRC 17069 / CCUG 31568 / BM 3577 / RP62A).